Reading from the N-terminus, the 428-residue chain is MALSGNCSRYYPREQGSAVPNSFPEVVELNVGGQVYFTRHSTLISIPHSLLWKMFSPKRDTANDLAKDSKGRFFIDRDGFLFRYILDYLRDRQVVLPDHFPEKGRLKREAEYFQLPDLVKLLTPDEIKQSPDEFCHSDFEDASQGSDTRICPPSSLLPADRKWGFITVGYRGSCTLGREGQADAKFRRVPRILVCGRISLAKEVFGETLNESRDPDRAPERYTSRFYLKFKHLERAFDMLSECGFHMVACNSSVTASFINQYTDDKIWSSYTEYVFYREPSRWSPSHCDCCCKNGKGDKEGESGTSCNDLSTSSCDSQSEASSPQETVICGPVTRQTNIQTLDRPIKKGPVQLIQQSEMRRKSDLLRTLTSGSRESNMSSKKKAVKEKLSIEEELEKCIQDFLKIKIPDRFPERKHPWQSELLRKYHL.

A BTB domain is found at 25-98 (EVVELNVGGQ…LRDRQVVLPD (74 aa)). Residue tyrosine 112 is modified to Phosphotyrosine. A phosphoserine mark is found at serine 130, serine 137, serine 143, and serine 146.

Homopentamer; forms an open pentamer. In contrast to other BTB domain-containing proteins, does not interact with CUL3. Interacts as a tetramer with GABRB1 and GABRB2.

The protein resides in the presynaptic cell membrane. Its subcellular location is the postsynaptic cell membrane. Functionally, auxiliary subunit of GABA-B receptors that determine the pharmacology and kinetics of the receptor response. Increases agonist potency and markedly alter the G-protein signaling of the receptors by accelerating onset and promoting desensitization. The chain is BTB/POZ domain-containing protein KCTD16 (KCTD16) from Homo sapiens (Human).